Here is a 253-residue protein sequence, read N- to C-terminus: UPF0280 protein MA_1715 (253 aa).

The protein belongs to the UPF0280 family.

The chain is UPF0280 protein MA_1715 from Methanosarcina acetivorans (strain ATCC 35395 / DSM 2834 / JCM 12185 / C2A).